The sequence spans 142 residues: Hemoglobin subunit alpha (142 aa).

Ser1 is modified (N-acetylserine). Positions 1–142 (SLSDKDKNTV…LALALSERYR (142 aa)) constitute a Globin domain. Position 59 (His59) interacts with O2. His88 contributes to the heme b binding site.

It belongs to the globin family. Heterotetramer of two alpha chains and two beta chains. Can form polymers. In terms of tissue distribution, red blood cells.

Functionally, involved in oxygen transport from gills to the various peripheral tissues. This Chelidonichthys kumu (Bluefin gurnard) protein is Hemoglobin subunit alpha (hba).